The sequence spans 220 residues: Iron-sulfur cluster repair protein YtfE (220 aa).

Belongs to the RIC family. YtfE subfamily. Homodimer.

It is found in the cytoplasm. Its function is as follows. Di-iron-containing protein involved in the repair of iron-sulfur clusters damaged by oxidative and nitrosative stress conditions. The polypeptide is Iron-sulfur cluster repair protein YtfE (Escherichia coli (strain SMS-3-5 / SECEC)).